Consider the following 214-residue polypeptide: Phosphatidylserine decarboxylase proenzyme (214 aa).

The active-site Schiff-base intermediate with substrate; via pyruvic acid is serine 182. Residue serine 182 is modified to Pyruvic acid (Ser); by autocatalysis.

Belongs to the phosphatidylserine decarboxylase family. PSD-A subfamily. Heterodimer of a large membrane-associated beta subunit and a small pyruvoyl-containing alpha subunit. Pyruvate is required as a cofactor. In terms of processing, is synthesized initially as an inactive proenzyme. Formation of the active enzyme involves a self-maturation process in which the active site pyruvoyl group is generated from an internal serine residue via an autocatalytic post-translational modification. Two non-identical subunits are generated from the proenzyme in this reaction, and the pyruvate is formed at the N-terminus of the alpha chain, which is derived from the carboxyl end of the proenzyme. The post-translation cleavage follows an unusual pathway, termed non-hydrolytic serinolysis, in which the side chain hydroxyl group of the serine supplies its oxygen atom to form the C-terminus of the beta chain, while the remainder of the serine residue undergoes an oxidative deamination to produce ammonia and the pyruvoyl prosthetic group on the alpha chain.

The protein resides in the cell membrane. It catalyses the reaction a 1,2-diacyl-sn-glycero-3-phospho-L-serine + H(+) = a 1,2-diacyl-sn-glycero-3-phosphoethanolamine + CO2. Its pathway is phospholipid metabolism; phosphatidylethanolamine biosynthesis; phosphatidylethanolamine from CDP-diacylglycerol: step 2/2. Its function is as follows. Catalyzes the formation of phosphatidylethanolamine (PtdEtn) from phosphatidylserine (PtdSer). In Burkholderia cenocepacia (strain ATCC BAA-245 / DSM 16553 / LMG 16656 / NCTC 13227 / J2315 / CF5610) (Burkholderia cepacia (strain J2315)), this protein is Phosphatidylserine decarboxylase proenzyme.